Consider the following 403-residue polypeptide: MHGFHDVFIQILLLLAISVSVIAIAKLLKEPDSIALVLVGLVLGLTELPIIEDAERYITQSEVFQATIISLFLPILLGDATLKLPFHHLFSQKKTVLGLAFVGTFVSSICIGTAAYFLLDLPLAVAFTFAALMSATDPISVLSIFKSLGVPQKMSTVMEGESLFNDGIAVVLFKIASIYLLTYMEMGWAGLGSGVFLFLKFAIGGALVGLVLGYFFSQVIRVFDDYPLEVAFSALLFFGSYFIAEHFHTSGVIAVVVGGFVFGDYGAKIGMSKETKTNINTFWDSVTLIANALIFLMVGLEIRNIDLAGNWGVIVGAILIVLVGRTIAVYLGTGWVQELSSKERLLINWGGLRGSLSVALALSLPMDFAGRDQVLLLTFSVVLFSLIVQGLTLKPLIKKLGMI.

Residues 1-6 (MHGFHD) lie on the Cytoplasmic side of the membrane. Residues 7-27 (VFIQILLLLAISVSVIAIAKL) traverse the membrane as a helical segment. Residues 28–30 (LKE) lie on the Extracellular side of the membrane. Residues 31-51 (PDSIALVLVGLVLGLTELPII) traverse the membrane as a helical segment. The Cytoplasmic portion of the chain corresponds to 52-65 (EDAERYITQSEVFQ). A helical transmembrane segment spans residues 66-86 (ATIISLFLPILLGDATLKLPF). Over 87–98 (HHLFSQKKTVLG) the chain is Extracellular. A helical membrane pass occupies residues 99–119 (LAFVGTFVSSICIGTAAYFLL). Residues 120 to 124 (DLPLA) are Cytoplasmic-facing. Residues 125–145 (VAFTFAALMSATDPISVLSIF) form a helical membrane-spanning segment. Residues 146 to 167 (KSLGVPQKMSTVMEGESLFNDG) lie on the Extracellular side of the membrane. Residues 168-188 (IAVVLFKIASIYLLTYMEMGW) traverse the membrane as a helical segment. Over 189 to 195 (AGLGSGV) the chain is Cytoplasmic. Residues 196–216 (FLFLKFAIGGALVGLVLGYFF) traverse the membrane as a helical segment. Topologically, residues 217–218 (SQ) are extracellular. Residues 219–239 (VIRVFDDYPLEVAFSALLFFG) traverse the membrane as a helical segment. At 240–241 (SY) the chain is on the cytoplasmic side. A helical membrane pass occupies residues 242–262 (FIAEHFHTSGVIAVVVGGFVF). Residues 263 to 281 (GDYGAKIGMSKETKTNINT) lie on the Extracellular side of the membrane. Residues 282–302 (FWDSVTLIANALIFLMVGLEI) traverse the membrane as a helical segment. Topologically, residues 303–310 (RNIDLAGN) are cytoplasmic. A helical membrane pass occupies residues 311–331 (WGVIVGAILIVLVGRTIAVYL). At 332–372 (GTGWVQELSSKERLLINWGGLRGSLSVALALSLPMDFAGRD) the chain is on the extracellular side. The chain crosses the membrane as a helical span at residues 373-393 (QVLLLTFSVVLFSLIVQGLTL). The Cytoplasmic portion of the chain corresponds to 394–403 (KPLIKKLGMI).

This sequence belongs to the monovalent cation:proton antiporter 1 (CPA1) transporter (TC 2.A.36) family.

The protein resides in the cell membrane. In terms of biological role, na(+)/H(+) antiporter that extrudes sodium in exchange for external protons. Can also transport lithium. This chain is Na(+)/H(+) antiporter NhaH (nhaH), found in Halobacillus dabanensis.